The sequence spans 435 residues: 3-phosphoshikimate 1-carboxyvinyltransferase (435 aa).

Positions 23, 24, and 28 each coordinate 3-phosphoshikimate. Position 23 (Lys23) interacts with phosphoenolpyruvate. Positions 97 and 125 each coordinate phosphoenolpyruvate. 3-phosphoshikimate is bound by residues Ser170, Ser171, Gln172, Ser198, Asp315, Asn338, and Lys342. Gln172 contacts phosphoenolpyruvate. Asp315 acts as the Proton acceptor in catalysis. 3 residues coordinate phosphoenolpyruvate: Arg346, Arg388, and Lys413.

This sequence belongs to the EPSP synthase family. In terms of assembly, monomer.

Its subcellular location is the cytoplasm. It carries out the reaction 3-phosphoshikimate + phosphoenolpyruvate = 5-O-(1-carboxyvinyl)-3-phosphoshikimate + phosphate. The protein operates within metabolic intermediate biosynthesis; chorismate biosynthesis; chorismate from D-erythrose 4-phosphate and phosphoenolpyruvate: step 6/7. Its function is as follows. Catalyzes the transfer of the enolpyruvyl moiety of phosphoenolpyruvate (PEP) to the 5-hydroxyl of shikimate-3-phosphate (S3P) to produce enolpyruvyl shikimate-3-phosphate and inorganic phosphate. The chain is 3-phosphoshikimate 1-carboxyvinyltransferase from Buchnera aphidicola subsp. Cinara cedri (strain Cc).